We begin with the raw amino-acid sequence, 134 residues long: MTNIRKTNPLLKIINSSFVDLPAPSSLSSWWNFGSLLGVCLGVQILTGLFLAIHYTSDTATAFNSVTHICRDVNYGWLLRYLHANGASMFFICLYLHVGRGLYYGSYTYSETWNIGILLLFAVMATAFMGYVLP.

A run of 3 helical transmembrane segments spans residues 33 to 53 (FGSL…FLAI), 77 to 98 (WLLR…YLHV), and 113 to 133 (WNIG…GYVL). Heme b-binding residues include H83 and H97.

It belongs to the cytochrome b family. In terms of assembly, the cytochrome bc1 complex contains 11 subunits: 3 respiratory subunits (MT-CYB, CYC1 and UQCRFS1), 2 core proteins (UQCRC1 and UQCRC2) and 6 low-molecular weight proteins (UQCRH/QCR6, UQCRB/QCR7, UQCRQ/QCR8, UQCR10/QCR9, UQCR11/QCR10 and a cleavage product of UQCRFS1). This cytochrome bc1 complex then forms a dimer. Heme b is required as a cofactor.

It is found in the mitochondrion inner membrane. Component of the ubiquinol-cytochrome c reductase complex (complex III or cytochrome b-c1 complex) that is part of the mitochondrial respiratory chain. The b-c1 complex mediates electron transfer from ubiquinol to cytochrome c. Contributes to the generation of a proton gradient across the mitochondrial membrane that is then used for ATP synthesis. This chain is Cytochrome b (MT-CYB), found in Platyrrhinus helleri (Heller's broad-nosed bat).